Consider the following 140-residue polypeptide: Cytochrome c-type biogenesis protein CcmE (140 aa).

At 1–7 the chain is on the cytoplasmic side; the sequence is MKRKHKR. The helical; Signal-anchor for type II membrane protein transmembrane segment at 8–28 threads the bilayer; the sequence is LLFVLASFCAAGCALLFILSE. The Periplasmic segment spans residues 29 to 140; the sequence is LRESVSFFYT…TAPKSSPEPK (112 aa). 2 residues coordinate heme: H121 and Y125.

This sequence belongs to the CcmE/CycJ family.

The protein resides in the cell inner membrane. Heme chaperone required for the biogenesis of c-type cytochromes. Transiently binds heme delivered by CcmC and transfers the heme to apo-cytochromes in a process facilitated by CcmF and CcmH. This chain is Cytochrome c-type biogenesis protein CcmE, found in Anaplasma marginale (strain St. Maries).